Reading from the N-terminus, the 169-residue chain is Cytochrome c oxidase subunit 4 isoform 1, mitochondrial (169 aa).

A mitochondrion-targeting transit peptide spans 1–22 (MLATRVFSLIGRRAISTSVCVR). The Mitochondrial matrix segment spans residues 23–98 (AHGSVVKSED…SFAEMNRSTN (76 aa)). The residue at position 29 (Lys-29) is an N6-acetyllysine; alternate. An N6-succinyllysine; alternate modification is found at Lys-29. Residue Lys-53 is modified to N6-acetyllysine. Phosphoserine is present on residues Ser-56 and Ser-58. N6-acetyllysine; alternate is present on Lys-60. Lys-60 carries the N6-succinyllysine; alternate modification. N6-acetyllysine is present on Lys-67. Residues 99 to 124 (EWKTVVGAAMFFIGFTALLLIWEKHY) traverse the membrane as a helical segment. The Mitochondrial intermembrane segment spans residues 125–169 (VYGPIPHTFEEEWVAKQTKRMLDMKVAPIQGFSAKWDYDKNEWKK).

The protein belongs to the cytochrome c oxidase IV family. As to quaternary structure, component of the cytochrome c oxidase (complex IV, CIV), a multisubunit enzyme composed of 14 subunits. The complex is composed of a catalytic core of 3 subunits MT-CO1, MT-CO2 and MT-CO3, encoded in the mitochondrial DNA, and 11 supernumerary subunits COX4I1 (or COX4I2), COX5A, COX5B, COX6A2 (or COX6A1), COX6B1 (or COX6B2), COX6C, COX7A1 (or COX7A2), COX7B, COX7C, COX8B and NDUFA4, which are encoded in the nuclear genome. The complex exists as a monomer or a dimer and forms supercomplexes (SCs) in the inner mitochondrial membrane with NADH-ubiquinone oxidoreductase (complex I, CI) and ubiquinol-cytochrome c oxidoreductase (cytochrome b-c1 complex, complex III, CIII), resulting in different assemblies (supercomplex SCI(1)III(2)IV(1) and megacomplex MCI(2)III(2)IV(2)). Interacts with PHB2; the interaction decreases in absence of SPHK2. Interacts with AFG1L. Interacts with ABCB7; this interaction allows the regulation of cellular iron homeostasis and cellular reactive oxygen species (ROS) levels in cardiomyocytes. Interacts with FLVCR2; this interaction occurs in the absence of heme and is disrupted upon heme binding. Interacts with IRGC.

It localises to the mitochondrion inner membrane. It participates in energy metabolism; oxidative phosphorylation. Functionally, component of the cytochrome c oxidase, the last enzyme in the mitochondrial electron transport chain which drives oxidative phosphorylation. The respiratory chain contains 3 multisubunit complexes succinate dehydrogenase (complex II, CII), ubiquinol-cytochrome c oxidoreductase (cytochrome b-c1 complex, complex III, CIII) and cytochrome c oxidase (complex IV, CIV), that cooperate to transfer electrons derived from NADH and succinate to molecular oxygen, creating an electrochemical gradient over the inner membrane that drives transmembrane transport and the ATP synthase. Cytochrome c oxidase is the component of the respiratory chain that catalyzes the reduction of oxygen to water. Electrons originating from reduced cytochrome c in the intermembrane space (IMS) are transferred via the dinuclear copper A center (CU(A)) of subunit 2 and heme A of subunit 1 to the active site in subunit 1, a binuclear center (BNC) formed by heme A3 and copper B (CU(B)). The BNC reduces molecular oxygen to 2 water molecules using 4 electrons from cytochrome c in the IMS and 4 protons from the mitochondrial matrix. The sequence is that of Cytochrome c oxidase subunit 4 isoform 1, mitochondrial (COX4I1) from Bos taurus (Bovine).